Reading from the N-terminus, the 100-residue chain is Urease subunit gamma (100 aa).

The protein belongs to the urease gamma subunit family. In terms of assembly, heterotrimer of UreA (gamma), UreB (beta) and UreC (alpha) subunits. Three heterotrimers associate to form the active enzyme.

The protein localises to the cytoplasm. It carries out the reaction urea + 2 H2O + H(+) = hydrogencarbonate + 2 NH4(+). It participates in nitrogen metabolism; urea degradation; CO(2) and NH(3) from urea (urease route): step 1/1. The polypeptide is Urease subunit gamma (Nostoc punctiforme (strain ATCC 29133 / PCC 73102)).